The following is a 274-amino-acid chain: MPFRSNNPIMRDELLSRFFPQFHPVTTFNSGLSGGSFLIEHQGQRFVVRQPHDPDAPQSAFLRQYRALSQLPASIAPKPHLYLRDWMVVDYLPGAVKTYLPDTNELAGLLYYLHQQPRFGWRITLLPLLELYWQQSDPARRTVGWLRMLKRLRKAREPRPLRLSPLHMDVHAGNLVHSASGLKLIDWEYAGDGDIALELAAVWVENTEQHRQLVNDYATRAKIYPAQLWRQVRRWFPWLLMLKAGWFEYRWRQTGDQQFIRLADDTWRQLLIKQ.

Belongs to the thiamine kinase family.

It carries out the reaction thiamine + ATP = thiamine phosphate + ADP + H(+). It functions in the pathway cofactor biosynthesis; thiamine diphosphate biosynthesis; thiamine phosphate from thiamine: step 1/1. Functionally, catalyzes the ATP-dependent phosphorylation of thiamine to thiamine phosphate. Is involved in thiamine salvage. The chain is Thiamine kinase from Escherichia coli O139:H28 (strain E24377A / ETEC).